The chain runs to 106 residues: Urease subunit beta (106 aa).

It belongs to the urease beta subunit family. Heterotrimer of UreA (gamma), UreB (beta) and UreC (alpha) subunits. Three heterotrimers associate to form the active enzyme.

The protein localises to the cytoplasm. It catalyses the reaction urea + 2 H2O + H(+) = hydrogencarbonate + 2 NH4(+). Its pathway is nitrogen metabolism; urea degradation; CO(2) and NH(3) from urea (urease route): step 1/1. The polypeptide is Urease subunit beta (Prochlorococcus marinus (strain NATL1A)).